Reading from the N-terminus, the 246-residue chain is Type III pantothenate kinase (246 aa).

11–18 (DIGNSFIK) contributes to the ATP binding site. Substrate is bound by residues Tyr-95 and 102-105 (GVDR). Asp-104 acts as the Proton acceptor in catalysis. Asp-125 is a K(+) binding site. Residue Thr-128 participates in ATP binding. Thr-179 lines the substrate pocket.

This sequence belongs to the type III pantothenate kinase family. Homodimer. The cofactor is NH4(+). Requires K(+) as cofactor.

It is found in the cytoplasm. The catalysed reaction is (R)-pantothenate + ATP = (R)-4'-phosphopantothenate + ADP + H(+). The protein operates within cofactor biosynthesis; coenzyme A biosynthesis; CoA from (R)-pantothenate: step 1/5. Functionally, catalyzes the phosphorylation of pantothenate (Pan), the first step in CoA biosynthesis. This is Type III pantothenate kinase from Pseudoalteromonas atlantica (strain T6c / ATCC BAA-1087).